A 239-amino-acid chain; its full sequence is Ribonuclease PH (239 aa).

Phosphate-binding positions include R86 and 124 to 126 (GTR).

It belongs to the RNase PH family. In terms of assembly, homohexameric ring arranged as a trimer of dimers.

The catalysed reaction is tRNA(n+1) + phosphate = tRNA(n) + a ribonucleoside 5'-diphosphate. In terms of biological role, phosphorolytic 3'-5' exoribonuclease that plays an important role in tRNA 3'-end maturation. Removes nucleotide residues following the 3'-CCA terminus of tRNAs; can also add nucleotides to the ends of RNA molecules by using nucleoside diphosphates as substrates, but this may not be physiologically important. Probably plays a role in initiation of 16S rRNA degradation (leading to ribosome degradation) during starvation. The sequence is that of Ribonuclease PH from Sinorhizobium medicae (strain WSM419) (Ensifer medicae).